The following is a 555-amino-acid chain: Myo-inositol transporter 2 (555 aa).

At 1-61 (MSSTLDTITP…NLVRAENEDK (61 aa)) the chain is on the cytoplasmic side. A helical membrane pass occupies residues 62–82 (VTPYFMFLISVAAIAGFLFGY). Residues 83–108 (DTGIVGAALPMVGTSLGHTLSATESE) are Extracellular-facing. A helical membrane pass occupies residues 109–129 (IITAGTTIGAIFGASILGTMA). Topologically, residues 130 to 142 (DKLGRKWAMIISD) are cytoplasmic. Residues 143-163 (FAFTAGAIIIAASYSVPQIIV) traverse the membrane as a helical segment. The Extracellular portion of the chain corresponds to 164–165 (GR). The chain crosses the membrane as a helical span at residues 166 to 186 (LVLGVGVGGAAVIAPLYIAEL). Topologically, residues 187–200 (APTAVRGRCVGANA) are cytoplasmic. The chain crosses the membrane as a helical span at residues 201-221 (FCIPFGQVVASAIGAGFQAGV). Over 222 to 228 (PYHIGWR) the chain is Extracellular. Residues 229–249 (VLFGLGVVPSVVQLCLMHFLP) form a helical membrane-spanning segment. The Cytoplasmic segment spans residues 250–328 (ESPRVLVLRG…AIISVSGVQA (79 aa)). A helical membrane pass occupies residues 329–349 (FGQLTGFNTLLYYSGTIFGLL). The Extracellular segment spans residues 350 to 355 (GLKNGA). Residues 356 to 376 (AAGLIPSCLNALFVFIGMSIV) traverse the membrane as a helical segment. Over 377–385 (DKVGRRKLM) the chain is Cytoplasmic. A helical transmembrane segment spans residues 386-406 (ITFIPGMMIAFTWTIISFHFL). Residues 407-427 (TKPTGGLLLKDYQYSTPLVGS) are Extracellular-facing. A helical transmembrane segment spans residues 428–448 (VLGSIVLFVIPFGLTYSHIIW). Residues 449–461 (YQSEFLPLEIRAA) are Cytoplasmic-facing. Residues 462–482 (GSAISTTACWLANLVVSVAYL) traverse the membrane as a helical segment. The Extracellular portion of the chain corresponds to 483 to 487 (TQLEK). A helical membrane pass occupies residues 488–508 (LGATGTYGLYLGFITIGYIFV). Residues 509 to 555 (YFCYPETKGLSIDETAEIFIDGFGIEKAHQMLREKRAFAAELYAGRA) are Cytoplasmic-facing.

It belongs to the major facilitator superfamily. Sugar transporter (TC 2.A.1.1) family.

It is found in the cell membrane. The enzyme catalyses myo-inositol(out) + H(+)(out) = myo-inositol(in) + H(+)(in). In terms of biological role, transporter for myo-inositol. The protein is Myo-inositol transporter 2 of Cryptococcus neoformans var. grubii serotype A (strain H99 / ATCC 208821 / CBS 10515 / FGSC 9487) (Filobasidiella neoformans var. grubii).